Here is a 1703-residue protein sequence, read N- to C-terminus: Protein TIC 214 (1703 aa).

6 consecutive transmembrane segments (helical) span residues 39–61, 67–87, 90–110, 138–158, 174–194, and 220–240; these read YYGFLTALPIGPSQILSIRTFFL, GIICILGSMMGQFVILLSIYC, LYVMLVKPHLMTLLVIPYMFY, LLLDSFIFQLLNPILLPNPVL, FFLTSSLLGWLCGHILFINSI, and FSILISITFFLYLGRSPVPLI. Disordered stretches follow at residues 615-643 and 1431-1494; these read GPRKGKLEDKEKEKEKAAQTQTEVKKERE and TKEP…WKSK. A coiled-coil region spans residues 618–660; that stretch reads KGKLEDKEKEKEKAAQTQTEVKKEREKEKEERVIKRFQNQSDF. The segment covering 619 to 643 has biased composition (basic and acidic residues); the sequence is GKLEDKEKEKEKAAQTQTEVKKERE.

This sequence belongs to the TIC214 family. As to quaternary structure, part of the Tic complex.

Its subcellular location is the plastid. The protein resides in the chloroplast inner membrane. Functionally, involved in protein precursor import into chloroplasts. May be part of an intermediate translocation complex acting as a protein-conducting channel at the inner envelope. The sequence is that of Protein TIC 214 from Psilotum nudum (Whisk fern).